The primary structure comprises 519 residues: MAPPGQLLPLARSLLPLSAPPFVSGRRRRLPTLVLGRALPPPTWLPHGRLSPAHPLPFAPPRRLSRPPPPATSLPGASPGGGAEAQAVLAEFVTSERVKVAAMLGLALALCNADRVVMSVAIVPLSQAYGWTPSFAGVVQSSFLWGYLVSPIIGGALVDYYGGKRVMAYGVALWSLATFLSPWAAARSLWLFLSTRVLLGMAEGVALPSMNNMVLRWFPRTERSSAVGIAMAGFQLGNTIGLLLSPIIMSRAGIFGPFVIFGLFGFLWVLVWISAISGTPGENAQISAHELDYITRGQKLVKTQSGGERLRKVPPFSKLLSKWPTWALISANAMHSWGYFVILSWMPVYFKTIYHVNLREAAWFSALPWVMMAVLGYVAGVVSDRLIQNGTSITLTRKIMQTIGFVGPGVALLGLNAAKSPVIASAWLTIAVGLKSFGHSGFLVNLQEIAPQYAGVLHGMSNTAGTFAAILGTVGAGFFVDRMGSFRGFLILTSLLYFSSTLFWDIFATGERVDFDGTG.

The N-terminal 76 residues, 1–76 (MAPPGQLLPL…PPPPATSLPG (76 aa)), are a transit peptide targeting the chloroplast. The segment covering 56 to 72 (LPFAPPRRLSRPPPPAT) has biased composition (pro residues). Residues 56–82 (LPFAPPRRLSRPPPPATSLPGASPGGG) are disordered. Helical transmembrane passes span 100–120 (VAAM…VMSV), 138–158 (VVQS…GALV), 166–186 (VMAY…WAAA), 188–208 (SLWL…VALP), 229–249 (IAMA…PIIM), 253–273 (GIFG…LVWI), 326–346 (WALI…LSWM), 362–382 (AWFS…AGVV), 403–423 (IGFV…SPVI), 424–444 (ASAW…GFLV), 460–480 (MSNT…GFFV), and 488–508 (GFLI…DIFA).

Belongs to the major facilitator superfamily. Sodium/anion cotransporter (TC 2.A.1.14) family.

The protein localises to the plastid. It localises to the chloroplast membrane. In terms of biological role, probable anion transporter. The protein is Probable anion transporter 3, chloroplastic (PHT4;3) of Oryza sativa subsp. japonica (Rice).